Reading from the N-terminus, the 1071-residue chain is ATP-dependent helicase/deoxyribonuclease subunit B (1071 aa).

Belongs to the helicase family. AddB/RexB type 2 subfamily. Heterodimer of AddA and RexB. It depends on Mg(2+) as a cofactor.

Its function is as follows. The heterodimer acts as both an ATP-dependent DNA helicase and an ATP-dependent, dual-direction single-stranded exonuclease. Recognizes the chi site generating a DNA molecule suitable for the initiation of homologous recombination. This subunit has 5' -&gt; 3' nuclease activity but not helicase activity. The protein is ATP-dependent helicase/deoxyribonuclease subunit B of Streptococcus pyogenes serotype M28 (strain MGAS6180).